The sequence spans 199 residues: Elongation factor Ts (199 aa).

Positions 81–84 (TDFV) are involved in Mg(2+) ion dislocation from EF-Tu.

Belongs to the EF-Ts family.

It localises to the cytoplasm. In terms of biological role, associates with the EF-Tu.GDP complex and induces the exchange of GDP to GTP. It remains bound to the aminoacyl-tRNA.EF-Tu.GTP complex up to the GTP hydrolysis stage on the ribosome. The protein is Elongation factor Ts of Thermotoga sp. (strain RQ2).